We begin with the raw amino-acid sequence, 157 residues long: MNDLTHIDSGGTARMVDVGGKAETHRVAIARGTIRMRGQTLDAIRSGNAPKGDVLGPARIAGIMAAKKTGDLIPLCHPLALDAVNVDFAFVADGIECTATASLTGRTGVEMEALTAVSVALLTIYDMAKALDKGMVIEAIRLVEKRGGKSGTWKAAE.

Substrate contacts are provided by residues L75–H77 and M111–E112. The active site involves D126.

This sequence belongs to the MoaC family. As to quaternary structure, homohexamer; trimer of dimers.

The enzyme catalyses (8S)-3',8-cyclo-7,8-dihydroguanosine 5'-triphosphate = cyclic pyranopterin phosphate + diphosphate. The protein operates within cofactor biosynthesis; molybdopterin biosynthesis. Its function is as follows. Catalyzes the conversion of (8S)-3',8-cyclo-7,8-dihydroguanosine 5'-triphosphate to cyclic pyranopterin monophosphate (cPMP). The chain is Cyclic pyranopterin monophosphate synthase from Novosphingobium aromaticivorans (strain ATCC 700278 / DSM 12444 / CCUG 56034 / CIP 105152 / NBRC 16084 / F199).